The chain runs to 453 residues: RPPPTIPGAPVVGGLLRFLRGPIPLIRAEYARLGPVFTVPILTRRITFLIGPDVSAHFFKSNESDMSQQEVYRFNVPTFGPGVVFDVDYQVRQEQFRFFTEALRANKLRSYVDQMVAEAEEYFSKWGESGTVDLKYELEHLIILTASRCLLGREVREKLFDDVSALFHDLDNGMLPISVIFPYLPIPAHRRRDQARTRLAEIFATIIKSRKASGQSEEDMLQCFIDSKYKNGRQTTESEVTGLLIAALFAGQHTSSITSTWTGAYLLKFQQYFAEAVEEQKEVMKRHGDKIDHDILAEMDVLYRCIKEALRLHPPLIMLLRQSHSDFSVTTREGKEFDIPKGHIVATSPAFANRLPHIFKNPDSYDPDRFAAGREEDKVAGAFSYISFGGGRHGCLGEPFAYLQIKAIWTHLLRNFEFELVSPFPENDWNAMVVGIKGEVMVNYKRRKLIVDN.

Position 395 (cysteine 395) interacts with heme.

Belongs to the cytochrome P450 family. It depends on heme as a cofactor.

It localises to the membrane. It carries out the reaction a 14alpha-methyl steroid + 3 reduced [NADPH--hemoprotein reductase] + 3 O2 = a Delta(14) steroid + formate + 3 oxidized [NADPH--hemoprotein reductase] + 4 H2O + 4 H(+). It functions in the pathway steroid biosynthesis; zymosterol biosynthesis; zymosterol from lanosterol: step 1/6. In terms of biological role, catalyzes the 14-alpha demethylation of obtusifoliol to 4 alpha-methyl-5 alpha-ergosta-8,14,24(28)-trien-3 beta-ol. The polypeptide is Obtusifoliol 14-alpha demethylase (CYP51) (Triticum aestivum (Wheat)).